A 127-amino-acid chain; its full sequence is uncharacterized protein (127 aa).

One can recognise a VOC domain in the interval 1–127 (MKIVVTSIFV…CGNLIQIVQK (127 aa)).

The protein belongs to the glyoxalase I family.

This is an uncharacterized protein from Bacillus subtilis (strain 168).